We begin with the raw amino-acid sequence, 412 residues long: Phosphoglycerate kinase (412 aa).

Substrate is bound by residues 26–28 (DFN), Arg42, 65–68 (HLGR), Arg133, and Arg166. ATP contacts are provided by residues Lys217, Gly308, Glu339, and 368-371 (GGDS).

Belongs to the phosphoglycerate kinase family. As to quaternary structure, monomer.

The protein localises to the cytoplasm. It carries out the reaction (2R)-3-phosphoglycerate + ATP = (2R)-3-phospho-glyceroyl phosphate + ADP. It functions in the pathway carbohydrate degradation; glycolysis; pyruvate from D-glyceraldehyde 3-phosphate: step 2/5. This Synechococcus sp. (strain JA-2-3B'a(2-13)) (Cyanobacteria bacterium Yellowstone B-Prime) protein is Phosphoglycerate kinase.